A 98-amino-acid chain; its full sequence is MTKSELIERIVTHQGLLSSKDVELAIKTMLEQMSQCLATGDRIEIRGFGSFSLHYRAPRVGRNPKTGQSVSLEGKFVPHFKPGKELRDRVNEEDEAEA.

It belongs to the bacterial histone-like protein family. As to quaternary structure, heterodimer of an alpha and a beta chain.

Functionally, this protein is one of the two subunits of integration host factor, a specific DNA-binding protein that functions in genetic recombination as well as in transcriptional and translational control. The polypeptide is Integration host factor subunit beta (Pseudomonas putida (strain GB-1)).